Here is a 612-residue protein sequence, read N- to C-terminus: Dihydroxy-acid dehydratase (612 aa).

Asp81 contacts Mg(2+). Cys122 contacts [2Fe-2S] cluster. Mg(2+)-binding residues include Asp123 and Lys124. Residue Lys124 is modified to N6-carboxylysine. Cys193 is a [2Fe-2S] cluster binding site. Glu489 contacts Mg(2+). The active-site Proton acceptor is the Ser515.

The protein belongs to the IlvD/Edd family. Homodimer. It depends on [2Fe-2S] cluster as a cofactor. Mg(2+) is required as a cofactor.

The enzyme catalyses (2R)-2,3-dihydroxy-3-methylbutanoate = 3-methyl-2-oxobutanoate + H2O. It catalyses the reaction (2R,3R)-2,3-dihydroxy-3-methylpentanoate = (S)-3-methyl-2-oxopentanoate + H2O. It participates in amino-acid biosynthesis; L-isoleucine biosynthesis; L-isoleucine from 2-oxobutanoate: step 3/4. Its pathway is amino-acid biosynthesis; L-valine biosynthesis; L-valine from pyruvate: step 3/4. Functionally, functions in the biosynthesis of branched-chain amino acids. Catalyzes the dehydration of (2R,3R)-2,3-dihydroxy-3-methylpentanoate (2,3-dihydroxy-3-methylvalerate) into 2-oxo-3-methylpentanoate (2-oxo-3-methylvalerate) and of (2R)-2,3-dihydroxy-3-methylbutanoate (2,3-dihydroxyisovalerate) into 2-oxo-3-methylbutanoate (2-oxoisovalerate), the penultimate precursor to L-isoleucine and L-valine, respectively. The polypeptide is Dihydroxy-acid dehydratase (Ectopseudomonas mendocina (strain ymp) (Pseudomonas mendocina)).